Consider the following 91-residue polypeptide: Small ribosomal subunit protein bS18 (91 aa).

The protein belongs to the bacterial ribosomal protein bS18 family. Part of the 30S ribosomal subunit. Forms a tight heterodimer with protein bS6.

Its function is as follows. Binds as a heterodimer with protein bS6 to the central domain of the 16S rRNA, where it helps stabilize the platform of the 30S subunit. This chain is Small ribosomal subunit protein bS18, found in Paraburkholderia phymatum (strain DSM 17167 / CIP 108236 / LMG 21445 / STM815) (Burkholderia phymatum).